The chain runs to 544 residues: Chaperonin GroEL (544 aa).

Residues 29 to 32, 86 to 90, glycine 413, 477 to 479, and aspartate 493 each bind ATP; these read TLGP, DGTTT, and DVL.

The protein belongs to the chaperonin (HSP60) family. Forms a cylinder of 14 subunits composed of two heptameric rings stacked back-to-back. Interacts with the co-chaperonin GroES.

It localises to the cytoplasm. The enzyme catalyses ATP + H2O + a folded polypeptide = ADP + phosphate + an unfolded polypeptide.. In terms of biological role, together with its co-chaperonin GroES, plays an essential role in assisting protein folding. The GroEL-GroES system forms a nano-cage that allows encapsulation of the non-native substrate proteins and provides a physical environment optimized to promote and accelerate protein folding. This is Chaperonin GroEL from Clostridium kluyveri (strain NBRC 12016).